Reading from the N-terminus, the 1001-residue chain is Sarcoplasmic/endoplasmic reticulum calcium ATPase 1 (1001 aa).

Transmembrane regions (helical) follow at residues 49–69, 90–110, 254–273, and 296–313; these read LWEL…LLAA, EPFV…WQER, DEFG…AVWL, and FKIA…GLPA. Ca(2+) contacts are provided by Val-304, Ala-305, Ile-307, and Glu-309. Residue Asp-351 is the 4-aspartylphosphate intermediate of the active site. Mg(2+) contacts are provided by Asp-351 and Thr-353. Thr-353 is a binding site for ATP. A Phosphothreonine modification is found at Thr-441. Positions 442, 489, 515, and 560 each coordinate ATP. Thr-569 is modified (phosphothreonine). A Phosphoserine modification is found at Ser-581. Residues Thr-625, Gly-626, Asp-627, Arg-678, and Lys-684 each coordinate ATP. A Mg(2+)-binding site is contributed by Asp-703. ATP is bound at residue Asn-706. The next 3 membrane-spanning stretches (helical) occupy residues 758–777, 788–808, and 829–851; these read KQFI…CIFL, IPVQ…TALG, and ISGW…TVGA. Ca(2+) is bound by residues Asn-768, Glu-771, Asn-796, Thr-799, and Asp-800. The interaction with PLN stretch occupies residues 788–808; that stretch reads IPVQLLWVNLVTDGLPATALG. Cys-876 and Cys-888 are joined by a disulfide. The next 3 helical transmembrane spans lie at 898-917, 931-949, and 965-985; these read TMAL…NSLS, IWLL…LILY, and TQWL…EILK. Residue Glu-908 coordinates Ca(2+). The segment at 932-943 is interaction with PLN; it reads WLLGSICLSMSL.

The protein belongs to the cation transport ATPase (P-type) (TC 3.A.3) family. Type IIA subfamily. As to quaternary structure, interacts with sarcolipin (SLN). Interacts with phospholamban (PLN). Interacts with myoregulin (MRLN). Interacts with DWORF. Interacts with VMP1. Requires Mg(2+) as cofactor. In terms of tissue distribution, skeletal muscle, fast twitch muscle (type II) fibers.

The protein resides in the endoplasmic reticulum membrane. Its subcellular location is the sarcoplasmic reticulum membrane. It catalyses the reaction Ca(2+)(in) + ATP + H2O = Ca(2+)(out) + ADP + phosphate + H(+). Inhibited by sarcolipin (SLN) and myoregulin (MRLN). Has also been shown to be reversibly inhibited by phospholamban (PLN) at low calcium concentrations in vitro. Dephosphorylated PLN decreases the apparent affinity of the ATPase for calcium and this inhibition is regulated by the phosphorylation of PLN in vitro. Enhanced by DWORF; DWORF increases activity by displacing sarcolipin (SLN), phospholamban (PLN) and myoregulin (MRLN). In terms of biological role, key regulator of striated muscle performance by acting as the major Ca(2+) ATPase responsible for the reuptake of cytosolic Ca(2+) into the sarcoplasmic reticulum. Catalyzes the hydrolysis of ATP coupled with the translocation of calcium from the cytosol to the sarcoplasmic reticulum lumen. Contributes to calcium sequestration involved in muscular excitation/contraction. This chain is Sarcoplasmic/endoplasmic reticulum calcium ATPase 1, found in Homo sapiens (Human).